Consider the following 62-residue polypeptide: Large ribosomal subunit protein bL28 (62 aa).

This sequence belongs to the bacterial ribosomal protein bL28 family.

In Staphylococcus epidermidis (strain ATCC 12228 / FDA PCI 1200), this protein is Large ribosomal subunit protein bL28.